Here is a 430-residue protein sequence, read N- to C-terminus: tRNA(Ile)-lysidine synthase (430 aa).

24 to 29 (SGGLDS) provides a ligand contact to ATP.

The protein belongs to the tRNA(Ile)-lysidine synthase family.

The protein resides in the cytoplasm. It carries out the reaction cytidine(34) in tRNA(Ile2) + L-lysine + ATP = lysidine(34) in tRNA(Ile2) + AMP + diphosphate + H(+). Its function is as follows. Ligates lysine onto the cytidine present at position 34 of the AUA codon-specific tRNA(Ile) that contains the anticodon CAU, in an ATP-dependent manner. Cytidine is converted to lysidine, thus changing the amino acid specificity of the tRNA from methionine to isoleucine. The polypeptide is tRNA(Ile)-lysidine synthase (Haemophilus influenzae (strain 86-028NP)).